Reading from the N-terminus, the 385-residue chain is 1-deoxy-D-xylulose 5-phosphate reductoisomerase (385 aa).

NADPH contacts are provided by Thr-10, Gly-11, Ser-12, Ile-13, and Asn-124. Residue Lys-125 coordinates 1-deoxy-D-xylulose 5-phosphate. Glu-126 contacts NADPH. Asp-150 is a binding site for Mn(2+). Residues Ser-151, Glu-152, Ser-176, and His-199 each contribute to the 1-deoxy-D-xylulose 5-phosphate site. Mn(2+) is bound at residue Glu-152. NADPH is bound at residue Gly-205. 1-deoxy-D-xylulose 5-phosphate-binding residues include Ser-212, Asn-217, Lys-218, and Glu-221. Glu-221 contacts Mn(2+).

Belongs to the DXR family. Mg(2+) is required as a cofactor. The cofactor is Mn(2+).

It carries out the reaction 2-C-methyl-D-erythritol 4-phosphate + NADP(+) = 1-deoxy-D-xylulose 5-phosphate + NADPH + H(+). It participates in isoprenoid biosynthesis; isopentenyl diphosphate biosynthesis via DXP pathway; isopentenyl diphosphate from 1-deoxy-D-xylulose 5-phosphate: step 1/6. Catalyzes the NADPH-dependent rearrangement and reduction of 1-deoxy-D-xylulose-5-phosphate (DXP) to 2-C-methyl-D-erythritol 4-phosphate (MEP). This is 1-deoxy-D-xylulose 5-phosphate reductoisomerase from Clostridium botulinum (strain Alaska E43 / Type E3).